A 305-amino-acid chain; its full sequence is Protoheme IX farnesyltransferase (305 aa).

9 helical membrane passes run 26–46 (VMSLVVFTAFVGLWIAPQPVN), 47–67 (PFVAFCAVLFIALGGGASGAL), 98–118 (LAVGIALSGLSVMMLGLAANW), 119–139 (FAAGFLAFTIFFYAVVYTIWL), 147–167 (IVIGGAAGAFPPMIGWACATG), 174–194 (LLMFALIFFWTPPHFWALALF), 220–240 (IFAYTLVLAPFALWLGFTSVG), 243–263 (LYLAVSVVLNALFIAGGWQIL), and 284–304 (LSLYYTFLHFLALLVQHWVGG).

This sequence belongs to the UbiA prenyltransferase family. Protoheme IX farnesyltransferase subfamily. In terms of assembly, interacts with CtaA.

It is found in the cell inner membrane. The enzyme catalyses heme b + (2E,6E)-farnesyl diphosphate + H2O = Fe(II)-heme o + diphosphate. Its pathway is porphyrin-containing compound metabolism; heme O biosynthesis; heme O from protoheme: step 1/1. Its function is as follows. Converts heme B (protoheme IX) to heme O by substitution of the vinyl group on carbon 2 of heme B porphyrin ring with a hydroxyethyl farnesyl side group. This is Protoheme IX farnesyltransferase from Paracoccus denitrificans (strain Pd 1222).